Reading from the N-terminus, the 362-residue chain is Phosphoserine aminotransferase (362 aa).

L-glutamate contacts are provided by S9 and R42. Pyridoxal 5'-phosphate contacts are provided by residues 76 to 77 (GR), W102, T153, D174, and Q197. An N6-(pyridoxal phosphate)lysine modification is found at K198. 239–240 (NT) is a pyridoxal 5'-phosphate binding site.

Belongs to the class-V pyridoxal-phosphate-dependent aminotransferase family. SerC subfamily. Homodimer. Pyridoxal 5'-phosphate serves as cofactor.

The protein resides in the cytoplasm. The enzyme catalyses O-phospho-L-serine + 2-oxoglutarate = 3-phosphooxypyruvate + L-glutamate. The catalysed reaction is 4-(phosphooxy)-L-threonine + 2-oxoglutarate = (R)-3-hydroxy-2-oxo-4-phosphooxybutanoate + L-glutamate. It functions in the pathway amino-acid biosynthesis; L-serine biosynthesis; L-serine from 3-phospho-D-glycerate: step 2/3. Its pathway is cofactor biosynthesis; pyridoxine 5'-phosphate biosynthesis; pyridoxine 5'-phosphate from D-erythrose 4-phosphate: step 3/5. In terms of biological role, catalyzes the reversible conversion of 3-phosphohydroxypyruvate to phosphoserine and of 3-hydroxy-2-oxo-4-phosphonooxybutanoate to phosphohydroxythreonine. The protein is Phosphoserine aminotransferase of Enterobacter sp. (strain 638).